The chain runs to 619 residues: MSKGTTSQDAPFGTLLGYAPGGVAIYSSDYSSLDPQEYEDDAVFRSYIDDEYMGHKWQCVEFARRFLFLNYGVVFTDVGMAWEIFSLRFLREVVNDNILPLQAFPNGSPRAPVAGALLIWDKGGEFKDTGHVAIITQLHGNKVRIAEQNVIHSPLPQGQQWTRELEMVVENGCYTLKDTFDDTTILGWMIQTEDTEYSLPQPEIAGELLKISGARLENKGQFDGKWLDEKDPLQNAYVQANGQVINQDPYHYYTITESAEQELIKATNELHLMYLHATDKVLKDDNLLALFDIPKILWPRLRLSWQRRRHHMITGRMDFCMDERGLKVYEYNADSASCHTEAGLILERWAEQGYKGNGFNPAEGLINELAGAWKHSRARPFVHIMQDKDIEENYHAQFMEQALHQAGFETRILRGLDELGWDAAGQLIDGEGRLVNCVWKTWAWETAFDQIREVSDREFAAVPIRTGHPQNEVRLIDVLLRPEVLVFEPLWTVIPGNKAILPILWSLFPHHRYLLDTDFTVNDELVKTGYAVKPIAGRCGSNIDLVSHHEEVLDKTSGKFAEQKNIYQQLWCLPKVDGKYIQVCTFTVGGNYGGTCLRGDESLVIKKESDIEPLIVVKK.

Residues 2-195 are gsp amidase; the sequence is SKGTTSQDAP…LGWMIQTEDT (194 aa). A Peptidase C51 domain is found at 34 to 176; the sequence is DPQEYEDDAV…MVVENGCYTL (143 aa). Position 58 (Q58) interacts with glutathionylspermidine. C59 (S-(gamma-glutamyl-cysteinyl-glycyl)-cysteine intermediate) is an active-site residue. Cysteine sulfenic acid (-SOH); transient is present on C59. Residues R64, 78 to 81, and N149 contribute to the glutathionylspermidine site; that span reads VGMA. A linker region spans residues 196–205; that stretch reads EYSLPQPEIA. The segment at 206–619 is gsp synthetase; the sequence is GELLKISGAR…DIEPLIVVKK (414 aa). R316 is a binding site for glutathione. ATP is bound at residue 316-318; that stretch reads RMD. Mg(2+)-binding residues include D318, E330, and N332. S335 is a binding site for glutathione. Residue E391 coordinates spermidine. Glutathione-binding residues include E392 and T446. Residues K498, K533, 539–540, 568–571, Q582, and 603–605 contribute to the ATP site; these read CG, QQLW, and LVI. A spermidine-binding site is contributed by D610.

In the C-terminal section; belongs to the glutathionylspermidine synthase preATP-grasp family. As to quaternary structure, homodimer. Post-translationally, oxidation of Cys-59 to sulfenic acid during oxidative stress selectively inhibits the amidase activity which leads to a rapid increase in the amounts of intracellular Gsp and Gsp S-thiolated proteins (GspSSPs).

It carries out the reaction spermidine + glutathione + ATP = glutathionylspermidine + ADP + phosphate + H(+). It catalyses the reaction glutathionylspermidine + H2O = spermidine + glutathione. It participates in sulfur metabolism; glutathione metabolism. It functions in the pathway amine and polyamine metabolism; spermidine metabolism. With respect to regulation, when exposed to oxidative stress, Gsp amidase activity is transiently inhibited in vivo by oxidation of the catalytic Cys-59 thiol to sulfenic acid; this modification does not affect Gsp synthetase activity. Gsp amidase activity is negatively autoregulated by the Gsp synthetase domain, and is activated by the Gsp synthetase substrates, GSH and ATP-Mg(2+); the occupancy of the synthetase active site may initiate communication through the protein as manifest by the release of inhibition of the amidase activity. A tetrahedral phosphonate analog of glutathionylspermidine, designed as a mimic of the proposed tetrahedral intermediate for either reaction, inhibits the synthetase activity (Ki of 10 uM) but does not inhibit the amidase activity. Amidase activity is inhibited by iodoacetamide in vitro. In terms of biological role, catalyzes the formation of an amide bond between glutathione (GSH) and spermidine coupled with hydrolysis of ATP; also catalyzes the opposing reaction, i.e. the hydrolysis of glutathionylspermidine (Gsp) back to glutathione and spermidine. The amidase active site can also hydrolyze Gsp-disulfide (Gsp-S-S-Gsp) to Gsp-SG and Gsp S-thiolated proteins (GspSSPs) to GSH S-thiolated protein (GSSPs). Likely acts synergistically with glutaredoxin to regulate the redox environment of E.coli and defend against oxidative damage. In vitro, the amidase active site also catalyzes hydrolysis of amide and ester derivatives of glutathione (e.g. glutathione ethyl ester and glutathione amide) but lacks activity toward acetylspermidine (N1 and N8) and acetylspermine (N1). The chain is Bifunctional glutathionylspermidine synthetase/amidase (gss) from Escherichia coli (strain K12).